The primary structure comprises 337 residues: Anthranilate phosphoribosyltransferase (337 aa).

5-phospho-alpha-D-ribose 1-diphosphate is bound by residues glycine 82, 85–86 (GD), threonine 90, 92–95 (NIST), 110–118 (KHGGRSVSS), and serine 122. Residue glycine 82 participates in anthranilate binding. Serine 94 provides a ligand contact to Mg(2+). Arginine 168 lines the anthranilate pocket. Mg(2+)-binding residues include aspartate 226 and glutamate 227.

The protein belongs to the anthranilate phosphoribosyltransferase family. Homodimer. It depends on Mg(2+) as a cofactor.

The catalysed reaction is N-(5-phospho-beta-D-ribosyl)anthranilate + diphosphate = 5-phospho-alpha-D-ribose 1-diphosphate + anthranilate. Its pathway is amino-acid biosynthesis; L-tryptophan biosynthesis; L-tryptophan from chorismate: step 2/5. Catalyzes the transfer of the phosphoribosyl group of 5-phosphorylribose-1-pyrophosphate (PRPP) to anthranilate to yield N-(5'-phosphoribosyl)-anthranilate (PRA). This Francisella tularensis subsp. holarctica (strain OSU18) protein is Anthranilate phosphoribosyltransferase.